Consider the following 582-residue polypeptide: Dihydroxy-acid dehydratase 3 (582 aa).

Cysteine 67 serves as a coordination point for [2Fe-2S] cluster. Aspartate 99 is a binding site for Mg(2+). Cysteine 140 serves as a coordination point for [2Fe-2S] cluster. Aspartate 141 and lysine 142 together coordinate Mg(2+). Residue lysine 142 is modified to N6-carboxylysine. Cysteine 212 contributes to the [2Fe-2S] cluster binding site. Glutamate 462 is a binding site for Mg(2+). Serine 488 functions as the Proton acceptor in the catalytic mechanism.

This sequence belongs to the IlvD/Edd family. Homodimer. The cofactor is [2Fe-2S] cluster. Requires Mg(2+) as cofactor.

It carries out the reaction (2R)-2,3-dihydroxy-3-methylbutanoate = 3-methyl-2-oxobutanoate + H2O. The enzyme catalyses (2R,3R)-2,3-dihydroxy-3-methylpentanoate = (S)-3-methyl-2-oxopentanoate + H2O. It functions in the pathway amino-acid biosynthesis; L-isoleucine biosynthesis; L-isoleucine from 2-oxobutanoate: step 3/4. Its pathway is amino-acid biosynthesis; L-valine biosynthesis; L-valine from pyruvate: step 3/4. Functions in the biosynthesis of branched-chain amino acids. Catalyzes the dehydration of (2R,3R)-2,3-dihydroxy-3-methylpentanoate (2,3-dihydroxy-3-methylvalerate) into 2-oxo-3-methylpentanoate (2-oxo-3-methylvalerate) and of (2R)-2,3-dihydroxy-3-methylbutanoate (2,3-dihydroxyisovalerate) into 2-oxo-3-methylbutanoate (2-oxoisovalerate), the penultimate precursor to L-isoleucine and L-valine, respectively. This chain is Dihydroxy-acid dehydratase 3, found in Bradyrhizobium diazoefficiens (strain JCM 10833 / BCRC 13528 / IAM 13628 / NBRC 14792 / USDA 110).